The sequence spans 319 residues: MTMPPLTLYLAAPRGFCAGVDRAIKIVEMALEKWGAPVYVRHEIVHNKFVVDRLRDMGAVFVEELDEAPTDRPVIFSAHGVPKAIPAEAERRNMVYVDATCPLVSKVHLEAERHHENGLQMIMIGHAGHPETVGTMGQLPEGEVLLVETVEDVAGLEVRDPERLAYITQTTLSIDDTAAIVAALRERFPAIAIPRKEDICYATTNRQGAVKAIAGRIDALLVIGAPNSSNSKRLVEVGRAAGCRVAQLVQRATDIDWEALQGATAVGVAAGASAPEVLVDEVIAAFRARFDTTVEAVETVKERVEFKVPRILREPAETP.

Cys-17 contributes to the [4Fe-4S] cluster binding site. Residues His-46 and His-79 each contribute to the (2E)-4-hydroxy-3-methylbut-2-enyl diphosphate site. Positions 46 and 79 each coordinate dimethylallyl diphosphate. Isopentenyl diphosphate is bound by residues His-46 and His-79. Cys-101 contributes to the [4Fe-4S] cluster binding site. His-129 contributes to the (2E)-4-hydroxy-3-methylbut-2-enyl diphosphate binding site. His-129 contacts dimethylallyl diphosphate. Position 129 (His-129) interacts with isopentenyl diphosphate. The active-site Proton donor is Glu-131. Residue Thr-170 coordinates (2E)-4-hydroxy-3-methylbut-2-enyl diphosphate. Residue Cys-200 coordinates [4Fe-4S] cluster. Residues Ser-228, Ser-229, Asn-230, and Ser-273 each coordinate (2E)-4-hydroxy-3-methylbut-2-enyl diphosphate. 4 residues coordinate dimethylallyl diphosphate: Ser-228, Ser-229, Asn-230, and Ser-273. The isopentenyl diphosphate site is built by Ser-228, Ser-229, Asn-230, and Ser-273.

It belongs to the IspH family. [4Fe-4S] cluster is required as a cofactor.

The catalysed reaction is isopentenyl diphosphate + 2 oxidized [2Fe-2S]-[ferredoxin] + H2O = (2E)-4-hydroxy-3-methylbut-2-enyl diphosphate + 2 reduced [2Fe-2S]-[ferredoxin] + 2 H(+). It carries out the reaction dimethylallyl diphosphate + 2 oxidized [2Fe-2S]-[ferredoxin] + H2O = (2E)-4-hydroxy-3-methylbut-2-enyl diphosphate + 2 reduced [2Fe-2S]-[ferredoxin] + 2 H(+). Its pathway is isoprenoid biosynthesis; dimethylallyl diphosphate biosynthesis; dimethylallyl diphosphate from (2E)-4-hydroxy-3-methylbutenyl diphosphate: step 1/1. The protein operates within isoprenoid biosynthesis; isopentenyl diphosphate biosynthesis via DXP pathway; isopentenyl diphosphate from 1-deoxy-D-xylulose 5-phosphate: step 6/6. In terms of biological role, catalyzes the conversion of 1-hydroxy-2-methyl-2-(E)-butenyl 4-diphosphate (HMBPP) into a mixture of isopentenyl diphosphate (IPP) and dimethylallyl diphosphate (DMAPP). Acts in the terminal step of the DOXP/MEP pathway for isoprenoid precursor biosynthesis. The protein is 4-hydroxy-3-methylbut-2-enyl diphosphate reductase of Cereibacter sphaeroides (strain ATCC 17023 / DSM 158 / JCM 6121 / CCUG 31486 / LMG 2827 / NBRC 12203 / NCIMB 8253 / ATH 2.4.1.) (Rhodobacter sphaeroides).